Consider the following 541-residue polypeptide: 2-hydroxyacylsphingosine 1-beta-galactosyltransferase (541 aa).

A signal peptide spans 1–20; the sequence is MKSYTPYFMLLWSAVGIARA. N-linked (GlcNAc...) asparagine glycans are attached at residues Asn-78, Asn-333, and Asn-442. A helical membrane pass occupies residues 472-492; it reads YFLLDIAFVLLLGAVALYFIV.

Belongs to the UDP-glycosyltransferase family. As to expression, brain, restricted to the oligodendrocyte-containing cell layers of cerebrum and cerebellum.

Its subcellular location is the membrane. It localises to the endoplasmic reticulum. It carries out the reaction an N-acylsphing-4-enine + UDP-alpha-D-galactose = a beta-D-galactosyl-(1&lt;-&gt;1')-N-acylsphing-4-enine + UDP + H(+). The catalysed reaction is N-(2-hydroxy-hexanoyl)-sphing-4-enine + UDP-alpha-D-galactose = N-(2-hydroxy-hexanoyl)-beta-D-galactosyl-sphing-4-enine + UDP + H(+). It catalyses the reaction N-(2-hydroxy-hexanoyl)-sphinganine + UDP-alpha-D-galactose = N-(2-hydroxyhexanoyl)-beta-D-galactosylsphinganine + UDP + H(+). The enzyme catalyses an N-acyl-sphingoid base + UDP-alpha-D-galactose = a D-galactosylceramide + UDP + H(+). The protein operates within sphingolipid metabolism; galactosylceramide biosynthesis. In terms of biological role, catalyzes the transfer of galactose to ceramide, a key enzymatic step in the biosynthesis of galactocerebrosides, which are abundant sphingolipids of the myelin membrane of the central nervous system and peripheral nervous system. Galactosylates both hydroxy- and non-hydroxy fatty acid-containing ceramides and diglycerides. This is 2-hydroxyacylsphingosine 1-beta-galactosyltransferase from Rattus norvegicus (Rat).